The primary structure comprises 257 residues: (R)-2-haloacid dehalogenase (257 aa).

The protein belongs to the HAD-like hydrolase superfamily. S-2-haloalkanoic acid dehalogenase family.

The catalysed reaction is an (R)-2-haloacid + H2O = a (2S)-2-hydroxycarboxylate + a halide anion + H(+). Functionally, catalyzes the hydrolytic dehalogenation of small (R)-2-haloalkanoic acids to yield the corresponding (S)-2-hydroxyalkanoic acids. Acts on acids of short chain lengths, C(2) to C(4), with inversion of configuration at C-2. This is (R)-2-haloacid dehalogenase (dehI) from Rhizobium sp. (strain NHG3).